The following is a 426-amino-acid chain: Trigger factor (426 aa).

Positions 165-239 constitute a PPIase FKBP-type domain; sequence GDVYKLNEAG…ISEIKRLELP (75 aa).

The protein belongs to the FKBP-type PPIase family. Tig subfamily.

The protein resides in the cytoplasm. The enzyme catalyses [protein]-peptidylproline (omega=180) = [protein]-peptidylproline (omega=0). Its function is as follows. Involved in protein export. Acts as a chaperone by maintaining the newly synthesized protein in an open conformation. Functions as a peptidyl-prolyl cis-trans isomerase. The protein is Trigger factor of Pelodictyon phaeoclathratiforme (strain DSM 5477 / BU-1).